The sequence spans 420 residues: Interleukin-5 receptor subunit alpha (420 aa).

The first 20 residues, 1–20, serve as a signal peptide directing secretion; it reads MIIVAHVLLILLGATEILQA. Topologically, residues 21–342 are extracellular; the sequence is DLLPDEKISL…NDEHKPLREW (322 aa). Residues 32 to 123 form the Fibronectin type-III 1 domain; that stretch reads PPVNFTIKVT…ASAELHAPPG (92 aa). Residues Asn35 and Asn131 are each glycosylated (N-linked (GlcNAc...) asparagine). 2 disulfides stabilise this stretch: Cys134-Cys155 and Cys182-Cys196. N-linked (GlcNAc...) asparagine glycosylation is found at Asn216 and Asn244. Positions 241 to 334 constitute a Fibronectin type-III 2 domain; it reads PPLNVTAEIE…WSQPIYVGND (94 aa). Cysteines 269 and 316 form a disulfide. Positions 322–326 match the WSXWS motif motif; sequence WSEWS. A helical transmembrane segment spans residues 343–362; it reads FVIVIMATICFILLILSLIC. Topologically, residues 363 to 420 are cytoplasmic; that stretch reads KICHLWIKLFPPIPAPKSNIKDLFVTTNYEKAGSSETEIEVICYIEKPGVETLEDSVF. Positions 371-379 match the Box 1 motif motif; sequence LFPPIPAPK.

The protein belongs to the type I cytokine receptor family. Type 5 subfamily. In terms of assembly, interacts with IL5. Interacts with CSF2RB. Interacts with JAK2. Interacts with SDCBP. As to expression, expressed on eosinophils and basophils.

The protein resides in the membrane. In terms of biological role, cell surface receptor that plays an important role in the survival, differentiation, and chemotaxis of eosinophils. Acts by forming a heterodimeric receptor with CSF2RB subunit and subsequently binding to interleukin-5. In unstimulated conditions, interacts constitutively with JAK2. Heterodimeric receptor activation leads to JAK2 stimulation and subsequent activation of the JAK-STAT pathway. This chain is Interleukin-5 receptor subunit alpha (IL5RA), found in Homo sapiens (Human).